The sequence spans 365 residues: UDP-N-acetylglucosamine--N-acetylmuramyl-(pentapeptide) pyrophosphoryl-undecaprenol N-acetylglucosamine transferase (365 aa).

UDP-N-acetyl-alpha-D-glucosamine-binding positions include 11-13 (TGG), N124, R165, S192, I246, and Q291.

Belongs to the glycosyltransferase 28 family. MurG subfamily.

The protein resides in the cell inner membrane. It catalyses the reaction di-trans,octa-cis-undecaprenyl diphospho-N-acetyl-alpha-D-muramoyl-L-alanyl-D-glutamyl-meso-2,6-diaminopimeloyl-D-alanyl-D-alanine + UDP-N-acetyl-alpha-D-glucosamine = di-trans,octa-cis-undecaprenyl diphospho-[N-acetyl-alpha-D-glucosaminyl-(1-&gt;4)]-N-acetyl-alpha-D-muramoyl-L-alanyl-D-glutamyl-meso-2,6-diaminopimeloyl-D-alanyl-D-alanine + UDP + H(+). Its pathway is cell wall biogenesis; peptidoglycan biosynthesis. Its function is as follows. Cell wall formation. Catalyzes the transfer of a GlcNAc subunit on undecaprenyl-pyrophosphoryl-MurNAc-pentapeptide (lipid intermediate I) to form undecaprenyl-pyrophosphoryl-MurNAc-(pentapeptide)GlcNAc (lipid intermediate II). This Nitratidesulfovibrio vulgaris (strain DP4) (Desulfovibrio vulgaris) protein is UDP-N-acetylglucosamine--N-acetylmuramyl-(pentapeptide) pyrophosphoryl-undecaprenol N-acetylglucosamine transferase.